The primary structure comprises 145 residues: D-aminoacyl-tRNA deacylase (145 aa).

A Gly-cisPro motif, important for rejection of L-amino acids motif is present at residues glycine 137–proline 138.

Belongs to the DTD family. As to quaternary structure, homodimer.

It localises to the cytoplasm. The catalysed reaction is glycyl-tRNA(Ala) + H2O = tRNA(Ala) + glycine + H(+). It catalyses the reaction a D-aminoacyl-tRNA + H2O = a tRNA + a D-alpha-amino acid + H(+). In terms of biological role, an aminoacyl-tRNA editing enzyme that deacylates mischarged D-aminoacyl-tRNAs. Also deacylates mischarged glycyl-tRNA(Ala), protecting cells against glycine mischarging by AlaRS. Acts via tRNA-based rather than protein-based catalysis; rejects L-amino acids rather than detecting D-amino acids in the active site. By recycling D-aminoacyl-tRNA to D-amino acids and free tRNA molecules, this enzyme counteracts the toxicity associated with the formation of D-aminoacyl-tRNA entities in vivo and helps enforce protein L-homochirality. The sequence is that of D-aminoacyl-tRNA deacylase from Pseudoalteromonas translucida (strain TAC 125).